Consider the following 619-residue polypeptide: MRVLVWIAGLAPLAVAVPSSSYRVAVAARADNTSASVAPSQNVSGAAPPELVVYTLPCEDGNSTARTAEIRLKQATLLYGPSLLGNASYFPGGPLGDAISLRDQTVWEGAAVVQSLRAFTDAAKVAANIKQNGGLNSLDDFKVLYQDGWKGSVPQGIARGQSENYTSDLLFSMERLSVNPYILKRLHPTEDALPFQVDRATVKQLTKTSLKALHAAGRLFVADHSYQRNYTRLANRYSAACTALFYLDPRSNQFLPLAIKTNVGADLTYTPLDTDNNNWLLAKIMFNNNDLFHGQIFHVAYPHAIAEIVHLAALRTMSARHPVLALMERLMYQAYAVRPLGERVLFNKGGLFEQNFAYPQDMVYKFVGDSYPTTGRWRAGYLDTDVRARGLVDADYGPELPHFPFYEDGSRLVEVIRRFVRSFVDATYHESDEMVAKDAELQAWVAEANGPAGVEDFEPGPLDTRERLVEVLTHMAWLTGCAHHVLNQGEPVTASGVLPMHPTALYAPVPTSKANTTADLLGYLPSAQKSVDQVTLLARFNRPDVVPTNQTLRYMFAAPQLLLGNGEAYRRANQRFVRAMGRISDEVKARRFDDRGLSQGMPFIWQALDPGNIPFYLSV.

The N-terminal stretch at 1–16 (MRVLVWIAGLAPLAVA) is a signal peptide. 6 N-linked (GlcNAc...) asparagine glycosylation sites follow: asparagine 32, asparagine 42, asparagine 62, asparagine 86, asparagine 164, and asparagine 229. The region spanning 55 to 619 (TLPCEDGNST…PGNIPFYLSV (565 aa)) is the Lipoxygenase domain. Mn(2+)-binding residues include histidine 298, histidine 303, histidine 483, and asparagine 487. N-linked (GlcNAc...) asparagine glycans are attached at residues asparagine 515 and asparagine 549. Position 619 (valine 619) interacts with Mn(2+).

The protein belongs to the lipoxygenase family. Manganese lipoxygenase subfamily. Mn(2+) is required as a cofactor.

Its subcellular location is the secreted. The catalysed reaction is (9Z,12Z)-octadecadienoate + O2 = (9S)-hydroperoxy-(10E,12Z)-octadecadienoate. The enzyme catalyses (9Z,12Z)-octadecadienoate + O2 = (11S)-hydroperoxy-(9Z,12Z)-octadecadienoate. It carries out the reaction (9Z,12Z)-octadecadienoate + O2 = (13R)-hydroperoxy-(9Z,11E)-octadecadienoate. It catalyses the reaction (9Z,12Z,15Z)-octadecatrienoate + O2 = (9S)-hydroperoxy-(10E,12Z,15Z)-octadecatrienoate. The catalysed reaction is (9Z,12Z,15Z)-octadecatrienoate + O2 = (11R)-hydroperoxy-(9Z,12Z,15Z)-octadecatrienoate. The enzyme catalyses (9Z,12Z,15Z)-octadecatrienoate + O2 = (13R)-hydroperoxy-(9Z,11E,15Z)-octadecatrienoate. It carries out the reaction (9S)-hydroperoxy-(10E,12Z,15Z)-octadecatrienoate + O2 = (9S,16S)-dihydroperoxy-(10E,12Z,14E)-octadecatrienoate. Functionally, lipoxygenase that metabolizes linoleic and alpha-linolenic acids to 9S-, 11- and 13R-hydroperoxy fatty acids. At the end of lipoxygenation, the intermediate product 11S-HPODE from linoleic acid is then transformed into 9S-HPODE and 13R-HPODE as the final products. The intermediate product 11R-HPOTrE from alpha-linolenic acid is transformed into 9S-HPOTrE and 13R-HPOTrE as the final products. 9S-HPOTrE is further oxidized by the enzyme to 9S,16S-DiHPOTrE as the end product. The sequence is that of Manganese lipoxygenase from Pyricularia oryzae (strain 70-15 / ATCC MYA-4617 / FGSC 8958) (Rice blast fungus).